Reading from the N-terminus, the 83-residue chain is Putative snRNP Sm-like protein (83 aa).

Positions 9 to 81 (KPMDVLKSAL…VIFVSPSKGD (73 aa)) constitute a Sm domain.

Belongs to the snRNP Sm proteins family.

The sequence is that of Putative snRNP Sm-like protein from Thermoplasma acidophilum (strain ATCC 25905 / DSM 1728 / JCM 9062 / NBRC 15155 / AMRC-C165).